We begin with the raw amino-acid sequence, 418 residues long: UDP-N-acetylglucosamine 1-carboxyvinyltransferase 2 (418 aa).

Residue 22–23 participates in phosphoenolpyruvate binding; sequence KN. A UDP-N-acetyl-alpha-D-glucosamine-binding site is contributed by arginine 93. The active-site Proton donor is the cysteine 117. Cysteine 117 carries the post-translational modification 2-(S-cysteinyl)pyruvic acid O-phosphothioketal. Residues 122–126, aspartate 305, and isoleucine 327 each bind UDP-N-acetyl-alpha-D-glucosamine; that span reads RPIDQ.

This sequence belongs to the EPSP synthase family. MurA subfamily.

The protein localises to the cytoplasm. The catalysed reaction is phosphoenolpyruvate + UDP-N-acetyl-alpha-D-glucosamine = UDP-N-acetyl-3-O-(1-carboxyvinyl)-alpha-D-glucosamine + phosphate. It participates in cell wall biogenesis; peptidoglycan biosynthesis. Functionally, cell wall formation. Adds enolpyruvyl to UDP-N-acetylglucosamine. This Clostridium acetobutylicum (strain ATCC 824 / DSM 792 / JCM 1419 / IAM 19013 / LMG 5710 / NBRC 13948 / NRRL B-527 / VKM B-1787 / 2291 / W) protein is UDP-N-acetylglucosamine 1-carboxyvinyltransferase 2.